Reading from the N-terminus, the 600-residue chain is Probable tripeptidyl-peptidase SED4 (600 aa).

The N-terminal stretch at 1–22 (MVSFTLRAIGACLIGLPALITA) is a signal peptide. A propeptide spans 23–202 (APTSHVSNGF…SVFTSDLEMT (180 aa)) (removed in mature form). Residues N210 and N281 are each glycosylated (N-linked (GlcNAc...) asparagine). The region spanning 212–600 (TITPDCIREL…FEKLSKLVLI (389 aa)) is the Peptidase S53 domain. Catalysis depends on charge relay system residues E288 and D292. N-linked (GlcNAc...) asparagine glycosylation is found at N323 and N404. Catalysis depends on S504, which acts as the Charge relay system. Ca(2+)-binding residues include D546, I547, G579, and D581.

It depends on Ca(2+) as a cofactor.

Its subcellular location is the secreted. It localises to the extracellular space. The enzyme catalyses Release of an N-terminal tripeptide from a polypeptide.. Functionally, secreted tripeptidyl-peptidase which degrades proteins at acidic pHs and is involved in virulence. The protein is Probable tripeptidyl-peptidase SED4 (SED4) of Trichophyton verrucosum (strain HKI 0517).